Consider the following 597-residue polypeptide: Tubulin polyglutamylase ttll-4 (597 aa).

The span at 1–18 (MSSGYSSAPSVSHTSSEA) shows a compositional bias: polar residues. 2 disordered regions span residues 1–39 (MSSGYSSAPSVSHTSSEADLNRIESYEDGVDEEASDEQR) and 80–107 (SKSKKKKQCPPNITIEKKNGNSSPFLKS). Residues 26 to 35 (YEDGVDEEAS) are compositionally biased toward acidic residues. The TTL domain maps to 134–472 (QSRLTWCHNS…HVPPSFDKLH (339 aa)). ATP contacts are provided by residues Lys-250, 256-257 (RG), 278-281 (QHYI), and 291-293 (KFD). Arg-256 contributes to the a protein binding site. Arg-317 is an L-glutamate binding site. ATP is bound at residue 338–339 (TN). The L-glutamate site is built by Tyr-340, Ser-341, and Lys-358. Residues Asp-418, Glu-431, and Asn-433 each coordinate Mg(2+). Lys-449 is a binding site for L-glutamate.

This sequence belongs to the tubulin--tyrosine ligase family. Mg(2+) serves as cofactor.

The catalysed reaction is L-glutamyl-[protein] + L-glutamate + ATP = gamma-L-glutamyl-L-glutamyl-[protein] + ADP + phosphate + H(+). Monoglutamylase which modifies tubulin, adding a single glutamate on the gamma-carboxyl group of specific glutamate residues of target proteins. Involved in the side-chain initiation step of the polyglutamylation reaction but not in the elongation step. Preferentially modifies beta-tail tubulin over the alpha-tubulin. Involved in side-chain glutamylation of tubulin in sensory cilia. Together with ttll-5 and ttll-11, required for male mating. This is Tubulin polyglutamylase ttll-4 (ttll-4) from Caenorhabditis briggsae.